A 401-amino-acid polypeptide reads, in one-letter code: Argininosuccinate synthase (401 aa).

9-17 (AYSGGLDTS) provides a ligand contact to ATP. An L-citrulline-binding site is contributed by Y86. ATP is bound at residue G116. The L-aspartate site is built by T118, N122, and D123. L-citrulline is bound at residue N122. L-citrulline is bound by residues R126, S174, S183, E259, and Y271.

The protein belongs to the argininosuccinate synthase family. Type 1 subfamily. In terms of assembly, homotetramer.

The protein localises to the cytoplasm. It carries out the reaction L-citrulline + L-aspartate + ATP = 2-(N(omega)-L-arginino)succinate + AMP + diphosphate + H(+). It participates in amino-acid biosynthesis; L-arginine biosynthesis; L-arginine from L-ornithine and carbamoyl phosphate: step 2/3. In Bacillus mycoides (strain KBAB4) (Bacillus weihenstephanensis), this protein is Argininosuccinate synthase.